Reading from the N-terminus, the 271-residue chain is Tryptophan synthase alpha chain (271 aa).

Residues Glu49 and Asp60 each act as proton acceptor in the active site.

It belongs to the TrpA family. As to quaternary structure, tetramer of two alpha and two beta chains.

The enzyme catalyses (1S,2R)-1-C-(indol-3-yl)glycerol 3-phosphate + L-serine = D-glyceraldehyde 3-phosphate + L-tryptophan + H2O. The protein operates within amino-acid biosynthesis; L-tryptophan biosynthesis; L-tryptophan from chorismate: step 5/5. The alpha subunit is responsible for the aldol cleavage of indoleglycerol phosphate to indole and glyceraldehyde 3-phosphate. The sequence is that of Tryptophan synthase alpha chain from Burkholderia pseudomallei (strain K96243).